We begin with the raw amino-acid sequence, 681 residues long: Methionine--tRNA ligase (681 aa).

A 'HIGH' region motif is present at residues 15–25; that stretch reads PYANGPIHLGH. Cysteine 146, cysteine 149, cysteine 159, and cysteine 162 together coordinate Zn(2+). Residues 332-336 carry the 'KMSKS' region motif; sequence KMSKS. Lysine 335 is an ATP binding site. Positions 547–569 are disordered; sequence DNMAQAPKDNGKAKKDKKEAKSE. A compositionally biased stretch (basic and acidic residues) spans 555–569; that stretch reads DNGKAKKDKKEAKSE. Positions 580–681 constitute a tRNA-binding domain; that stretch reads DFAKIDLRIA…SGAQPGMQVK (102 aa).

The protein belongs to the class-I aminoacyl-tRNA synthetase family. MetG type 1 subfamily. Homodimer. It depends on Zn(2+) as a cofactor.

It localises to the cytoplasm. The enzyme catalyses tRNA(Met) + L-methionine + ATP = L-methionyl-tRNA(Met) + AMP + diphosphate. In terms of biological role, is required not only for elongation of protein synthesis but also for the initiation of all mRNA translation through initiator tRNA(fMet) aminoacylation. This chain is Methionine--tRNA ligase, found in Hahella chejuensis (strain KCTC 2396).